Consider the following 288-residue polypeptide: 2-dehydro-3-deoxyphosphooctonate aldolase (288 aa).

This sequence belongs to the KdsA family.

It localises to the cytoplasm. It carries out the reaction D-arabinose 5-phosphate + phosphoenolpyruvate + H2O = 3-deoxy-alpha-D-manno-2-octulosonate-8-phosphate + phosphate. The protein operates within carbohydrate biosynthesis; 3-deoxy-D-manno-octulosonate biosynthesis; 3-deoxy-D-manno-octulosonate from D-ribulose 5-phosphate: step 2/3. It participates in bacterial outer membrane biogenesis; lipopolysaccharide biosynthesis. This chain is 2-dehydro-3-deoxyphosphooctonate aldolase, found in Syntrophobacter fumaroxidans (strain DSM 10017 / MPOB).